The chain runs to 1008 residues: RNA cytidine acetyltransferase (1008 aa).

ATP contacts are provided by residues 282–291 (GRGKSAALGL) and R443. Residues 531-713 (CLLGPVQRMD…VPVYLSQKSN (183 aa)) enclose the N-acetyltransferase domain. Residues 601–603 (VAT), 608–614 (QRMGYGK), and N700 contribute to the acetyl-CoA site. Position 907 is a phosphoserine (S907). Residues 950–1008 (ALETNGTGGGSGLLSVKSGVKRLDGPIETREDGDLAAPLSKKKKKNNPKQRRSQGKSLI) are disordered. Basic and acidic residues predominate over residues 970–982 (KRLDGPIETREDG). Over residues 989–1008 (SKKKKKNNPKQRRSQGKSLI) the composition is skewed to basic residues.

Belongs to the RNA cytidine acetyltransferase family. NAT10 subfamily. In terms of assembly, component of the PRC1 complex (PSC, PC, PH and dRING1) in 0-12 hours Drosophila embryos. This complex is distinct from the Esc/E(z) complex, which contains many other PcG proteins like Esc, E(z), Su(z)12, HDAC1/Rpd3, Caf1-55 and probably Pho. The two complexes however cooperate and interact together during the first 3 hours of development to establish PcG silencing. Part of the small subunit (SSU) processome, composed of more than 70 proteins and the RNA chaperone small nucleolar RNA (snoRNA) U3.

It is found in the nucleus. The protein localises to the nucleolus. The enzyme catalyses a cytidine in 18S rRNA + acetyl-CoA + ATP + H2O = an N(4)-acetylcytidine in 18S rRNA + ADP + phosphate + CoA + H(+). The catalysed reaction is a cytidine in tRNA + acetyl-CoA + ATP + H2O = an N(4)-acetylcytidine in tRNA + ADP + phosphate + CoA + H(+). RNA cytidine acetyltransferase with specificity toward both 18S rRNA and tRNAs. Catalyzes the formation of N(4)-acetylcytidine (ac4C) in 18S rRNA. Required for early nucleolar cleavages of precursor rRNA at sites A0, A1 and A2 during 18S rRNA synthesis. Catalyzes the formation of ac4C in serine and leucine tRNAs. Requires a tRNA-binding adapter protein for full tRNA acetyltransferase activity but not for 18S rRNA acetylation. Polycomb group (PcG) protein. PcG proteins act by forming multiprotein complexes, which are required to maintain the transcriptionally repressive state of homeotic genes throughout development. PcG proteins are not required to initiate repression, but to maintain it during later stages of development. They probably act via the methylation of histones, rendering chromatin heritably changed in its expressibility. Part of the small subunit (SSU) processome, first precursor of the small eukaryotic ribosomal subunit. During the assembly of the SSU processome in the nucleolus, many ribosome biogenesis factors, an RNA chaperone and ribosomal proteins associate with the nascent pre-rRNA and work in concert to generate RNA folding, modifications, rearrangements and cleavage as well as targeted degradation of pre-ribosomal RNA by the RNA exosome. This Drosophila melanogaster (Fruit fly) protein is RNA cytidine acetyltransferase (l(1)G0020).